Consider the following 130-residue polypeptide: UPF0102 protein Cthe_0758 (130 aa).

This sequence belongs to the UPF0102 family.

This Acetivibrio thermocellus (strain ATCC 27405 / DSM 1237 / JCM 9322 / NBRC 103400 / NCIMB 10682 / NRRL B-4536 / VPI 7372) (Clostridium thermocellum) protein is UPF0102 protein Cthe_0758.